We begin with the raw amino-acid sequence, 260 residues long: Thiazole synthase (260 aa).

Catalysis depends on lysine 102, which acts as the Schiff-base intermediate with DXP. Residues glycine 163, 189–190, and 211–212 each bind 1-deoxy-D-xylulose 5-phosphate; these read AG and NT.

The protein belongs to the ThiG family. Homotetramer. Forms heterodimers with either ThiH or ThiS.

The protein localises to the cytoplasm. It catalyses the reaction [ThiS sulfur-carrier protein]-C-terminal-Gly-aminoethanethioate + 2-iminoacetate + 1-deoxy-D-xylulose 5-phosphate = [ThiS sulfur-carrier protein]-C-terminal Gly-Gly + 2-[(2R,5Z)-2-carboxy-4-methylthiazol-5(2H)-ylidene]ethyl phosphate + 2 H2O + H(+). The protein operates within cofactor biosynthesis; thiamine diphosphate biosynthesis. Functionally, catalyzes the rearrangement of 1-deoxy-D-xylulose 5-phosphate (DXP) to produce the thiazole phosphate moiety of thiamine. Sulfur is provided by the thiocarboxylate moiety of the carrier protein ThiS. In vitro, sulfur can be provided by H(2)S. This Geobacter sp. (strain M21) protein is Thiazole synthase.